Reading from the N-terminus, the 317-residue chain is Pantothenate kinase (317 aa).

ATP is bound at residue 99-106; it reads GSVSVGKS.

It belongs to the prokaryotic pantothenate kinase family.

The protein resides in the cytoplasm. The catalysed reaction is (R)-pantothenate + ATP = (R)-4'-phosphopantothenate + ADP + H(+). It functions in the pathway cofactor biosynthesis; coenzyme A biosynthesis; CoA from (R)-pantothenate: step 1/5. This chain is Pantothenate kinase, found in Histophilus somni (strain 129Pt) (Haemophilus somnus).